The primary structure comprises 350 residues: MSEDRSKAYTDAGVDINAGNALVSRIKSIVARTHTNGVISDIGGFGGLFKPDLAGMDEPVLVSSTDGVGTKLKCAFQFGKHDTVGIDLVAMSVNDILVQGARPLFFLDYFATGKLDVDVAASVISGVAEGCRRASCALLGGETAEMPEMYAPGEYDLAGFCVGLVDNTRIVDGSSIRVGDSIIGIASTGLHSNGYSLARKVLAQSGLNGNDPLPGSDRTVAEVLLEPTAIYVDIVRSVMRDFAIKGMVHVTGGGFYDNIPRVLPATVEAHIDFGSWTVPPVFNWLLAQGNLTWPEMLQIFNCGIGYIMIVSPDVCDEVLGRVNAMHAQAWRIGSIGRRRDKAAEQVQVAF.

The protein belongs to the AIR synthase family.

It localises to the cytoplasm. The enzyme catalyses 2-formamido-N(1)-(5-O-phospho-beta-D-ribosyl)acetamidine + ATP = 5-amino-1-(5-phospho-beta-D-ribosyl)imidazole + ADP + phosphate + H(+). It participates in purine metabolism; IMP biosynthesis via de novo pathway; 5-amino-1-(5-phospho-D-ribosyl)imidazole from N(2)-formyl-N(1)-(5-phospho-D-ribosyl)glycinamide: step 2/2. The sequence is that of Phosphoribosylformylglycinamidine cyclo-ligase from Nitratidesulfovibrio vulgaris (strain DSM 19637 / Miyazaki F) (Desulfovibrio vulgaris).